Reading from the N-terminus, the 218-residue chain is Small ribosomal subunit protein uS3c (218 aa).

Residues 47–118 form the KH type-2 domain; sequence VQKNIRISSG…KLNIAITRIS (72 aa).

It belongs to the universal ribosomal protein uS3 family. Part of the 30S ribosomal subunit.

Its subcellular location is the plastid. It is found in the chloroplast. The chain is Small ribosomal subunit protein uS3c (rps3) from Arabis hirsuta (Hairy rock-cress).